Here is a 445-residue protein sequence, read N- to C-terminus: O-fucosyltransferase 23 (445 aa).

The helical; Signal-anchor for type II membrane protein transmembrane segment at 12–34 (IFSKSVACKCLVLVGIALFYRAL) threads the bilayer. N-linked (GlcNAc...) asparagine glycans are attached at residues Asn-97 and Asn-179. 258 to 260 (HMR) provides a ligand contact to substrate. An N-linked (GlcNAc...) asparagine glycan is attached at Asn-294. 374-375 (TF) lines the substrate pocket. Residue Asn-424 is glycosylated (N-linked (GlcNAc...) asparagine).

This sequence belongs to the glycosyltransferase GT106 family. In terms of tissue distribution, expressed in dry pollen grains and germinating pollen grains.

The protein localises to the golgi apparatus membrane. It participates in glycan metabolism. In terms of biological role, probable protein O-fucosyltransferase required for correct pollen tube penetration through the stigma-style interface. May be involved in protein O-glycosylation events during pollen-pistil interactions. In Arabidopsis thaliana (Mouse-ear cress), this protein is O-fucosyltransferase 23.